A 146-amino-acid polypeptide reads, in one-letter code: Hemoglobin subunit beta (146 aa).

Position 1 is an N-acetylvaline (V1). Residues H2–H146 enclose the Globin domain. At T12 the chain carries Phosphothreonine. K59 carries the N6-acetyllysine modification. H63 is a binding site for heme b. K82 bears the N6-acetyllysine mark. H92 is a heme b binding site. C93 is modified (S-nitrosocysteine). An N6-acetyllysine modification is found at K144.

The protein belongs to the globin family. In terms of assembly, heterotetramer of two alpha chains and two beta chains. In terms of tissue distribution, red blood cells.

Functionally, involved in oxygen transport from the lung to the various peripheral tissues. This chain is Hemoglobin subunit beta (HBB), found in Osphranter rufus (Red kangaroo).